The following is a 377-amino-acid chain: D-alanine--D-alanine ligase (377 aa).

Residues 137 to 346 (KELMTVNGIR…RSQQAEKLIQ (210 aa)) enclose the ATP-grasp domain. 167 to 222 (SKQLGEVVFVKAANQGSSVGVSRVTNAEEYENALRDSFQYDEKLLVEKAVESPTEL) provides a ligand contact to ATP. 3 residues coordinate Mg(2+): Asp300, Glu313, and Asn315.

It belongs to the D-alanine--D-alanine ligase family. Mg(2+) serves as cofactor. Requires Mn(2+) as cofactor.

The protein localises to the cytoplasm. It carries out the reaction 2 D-alanine + ATP = D-alanyl-D-alanine + ADP + phosphate + H(+). Its pathway is cell wall biogenesis; peptidoglycan biosynthesis. In terms of biological role, cell wall formation. This Oenococcus oeni (strain ATCC BAA-331 / PSU-1) protein is D-alanine--D-alanine ligase.